The following is a 579-amino-acid chain: UPF0324 membrane protein DVU_2133 (579 aa).

11 helical membrane passes run 26 to 45 (YWAI…LFLA), 193 to 215 (PFNI…AVGM), 225 to 243 (FLVG…LMMG), 250 to 272 (YWGI…TVGT), 305 to 327 (IGIP…TFIF), 369 to 391 (LTLA…PAFI), 401 to 423 (GGAW…AFLG), 436 to 456 (IQNV…CARV), 476 to 495 (FVLG…GSLG), 515 to 534 (LRNW…TNFR), and 549 to 571 (YVAG…FYIV).

The protein belongs to the UPF0324 family.

The protein resides in the cell membrane. The chain is UPF0324 membrane protein DVU_2133 from Nitratidesulfovibrio vulgaris (strain ATCC 29579 / DSM 644 / CCUG 34227 / NCIMB 8303 / VKM B-1760 / Hildenborough) (Desulfovibrio vulgaris).